The primary structure comprises 200 residues: Small ribosomal subunit protein uS4 (200 aa).

Residues 22 to 42 are disordered; that stretch reads TGKELEKRPYAPGPHGPNQRK. The region spanning 92–152 is the S4 RNA-binding domain; it reads ARLDNLVYRM…EKSNSLVVVK (61 aa).

This sequence belongs to the universal ribosomal protein uS4 family. Part of the 30S ribosomal subunit. Contacts protein S5. The interaction surface between S4 and S5 is involved in control of translational fidelity.

One of the primary rRNA binding proteins, it binds directly to 16S rRNA where it nucleates assembly of the body of the 30S subunit. In terms of biological role, with S5 and S12 plays an important role in translational accuracy. The polypeptide is Small ribosomal subunit protein uS4 (Bacillus mycoides (strain KBAB4) (Bacillus weihenstephanensis)).